We begin with the raw amino-acid sequence, 470 residues long: E3 ubiquitin-protein ligase TRIM21 (470 aa).

The RING-type zinc finger occupies 20-59 (CSICLDPMVEPMSIECGHCFCKECIFEVGKNGGSSCPECR). Zn(2+) contacts are provided by cysteine 96, histidine 99, cysteine 118, and histidine 124. The B box-type zinc finger occupies 96-127 (CMKHGEKLHLFCEEDGQALCWVCAQSGKHRDH). The stretch at 188-250 (LQNSLLAQEE…RGSELELLQE (63 aa)) forms a coiled coil. Residues 272-470 (DLTSTCPVPG…APLKLCPLKM (199 aa)) enclose the B30.2/SPRY domain.

It belongs to the TRIM/RBCC family. As to quaternary structure, homotrimer. Component of a SCF(SKP2)-like complex containing CUL1, SKP1, TRIM21 and SKP2. Interacts with CALR, CUL1, FBXW11, HSPA5, IKBKB, IRF3, SKP1 and VCP. Interacts with SKP2; the interaction with SKP2 does not depend on an intact F-box domain. Interacts (via N-terminus and C-terminus) with DCP2 (via N-terminus and C-terminus). Interacts (via C-terminus) with IRF8 (via C-terminus). Interacts with ULK1, BECN1 and with ATG8 family members, including GABARAP, GABARAPL1, GABARAPL2 and MAP1LC3C/LC3C. Interacts with TRIM21 and SQSTM1/sequestosome 1. Interacts with IRF3. Interacts (via the SPRY domain) with NMI (via coiled-coil domain); the interaction promotes 'Lys-63'-linked ubiquitination of NMI. Interacts with IFI35 and NMI; the interaction facilitates NMI-IFI35 complex formation. Autoubiquitinated; does not lead to its proteasomal degradation. Deubiquitinated by USP4; leading to its stabilization. Autoubiquitinated.

It localises to the cytoplasm. The protein resides in the cytoplasmic vesicle. It is found in the autophagosome. The protein localises to the nucleus. Its subcellular location is the P-body. It localises to the stress granule. It catalyses the reaction S-ubiquitinyl-[E2 ubiquitin-conjugating enzyme]-L-cysteine + [acceptor protein]-L-lysine = [E2 ubiquitin-conjugating enzyme]-L-cysteine + N(6)-ubiquitinyl-[acceptor protein]-L-lysine.. It participates in protein modification; protein ubiquitination. In terms of biological role, E3 ubiquitin-protein ligase whose activity is dependent on E2 enzymes, UBE2D1, UBE2D2, UBE2E1 and UBE2E2. Forms a ubiquitin ligase complex in cooperation with the E2 UBE2D2 that is used not only for the ubiquitination of USP4 and IKBKB but also for its self-ubiquitination. Component of cullin-RING-based SCF (SKP1-CUL1-F-box protein) E3 ubiquitin-protein ligase complexes such as SCF(SKP2)-like complexes. A TRIM21-containing SCF(SKP2)-like complex is shown to mediate ubiquitination of CDKN1B ('Thr-187' phosphorylated-form), thereby promoting its degradation by the proteasome. Monoubiquitinates IKBKB that will negatively regulates Tax-induced NF-kappa-B signaling. Negatively regulates IFN-beta production post-pathogen recognition by catalyzing polyubiquitin-mediated degradation of IRF3. Mediates the ubiquitin-mediated proteasomal degradation of IgG1 heavy chain, which is linked to the VCP-mediated ER-associated degradation (ERAD) pathway. Promotes IRF8 ubiquitination, which enhanced the ability of IRF8 to stimulate cytokine genes transcription in macrophages. Plays a role in the regulation of the cell cycle progression. Enhances the decapping activity of DCP2. Exists as a ribonucleoprotein particle present in all mammalian cells studied and composed of a single polypeptide and one of four small RNA molecules. At least two isoforms are present in nucleated and red blood cells, and tissue specific differences in RO/SSA proteins have been identified. The common feature of these proteins is their ability to bind HY RNAs.2. Involved in the regulation of innate immunity and the inflammatory response in response to IFNG/IFN-gamma. Organizes autophagic machinery by serving as a platform for the assembly of ULK1, Beclin 1/BECN1 and ATG8 family members and recognizes specific autophagy targets, thus coordinating target recognition with assembly of the autophagic apparatus and initiation of autophagy. Also regulates autophagy through FIP200/RB1CC1 ubiquitination and subsequent decreased protein stability. Represses the innate antiviral response by facilitating the formation of the NMI-IFI35 complex through 'Lys-63'-linked ubiquitination of NMI. During viral infection, promotes cell pyroptosis by mediating 'Lys-6'-linked ubiquitination of ISG12a/IFI27, facilitating its translocation into the mitochondria and subsequent CASP3 activation. When up-regulated through the IFN/JAK/STAT signaling pathway, promotes 'Lys-27'-linked ubiquitination of MAVS, leading to the recruitment of TBK1 and up-regulation of innate immunity. Mediates 'Lys-63'-linked polyubiquitination of G3BP1 in response to heat shock, leading to stress granule disassembly. In Mus musculus (Mouse), this protein is E3 ubiquitin-protein ligase TRIM21 (Trim21).